A 54-amino-acid polypeptide reads, in one-letter code: UPF0391 membrane protein Tbd_2238 (54 aa).

2 helical membrane passes run 5-25 (ALVFFIIAIVAAVFGFSGIAA) and 28-48 (VGIAKILFVVFLIMAIATFVV).

It belongs to the UPF0391 family.

It is found in the cell membrane. This Thiobacillus denitrificans (strain ATCC 25259 / T1) protein is UPF0391 membrane protein Tbd_2238.